Reading from the N-terminus, the 664-residue chain is Alcohol oxidase (664 aa).

8–39 (DIIVVGGGSTGCCIAGRLANLDDQNLTVALIE) is an FAD binding site. Catalysis depends on histidine 568, which acts as the Proton acceptor. Residues 662–664 (ARF) carry the Microbody targeting signal motif.

The protein belongs to the GMC oxidoreductase family. Homooctamer. The cofactor is FAD.

Its subcellular location is the peroxisome matrix. It catalyses the reaction a primary alcohol + O2 = an aldehyde + H2O2. It functions in the pathway energy metabolism; methane degradation. Functionally, catalyzes the oxidation of methanol to formaldehyde and hydrogen peroxide, the first step in the methanol utilization pathway of methylotrophic yeasts. The sequence is that of Alcohol oxidase (MOX) from Pichia angusta (Yeast).